A 591-amino-acid polypeptide reads, in one-letter code: Transcription factor COE1-A (591 aa).

The interval 63–66 (RKSN) is interaction with DNA. A C5-type zinc finger spans residues 151–170 (CRVLLTHEIMCSRCCDKKSC). Interaction with DNA regions lie at residues 197-204 (NCLKNAGN) and 236-239 (NNSK). The IPT/TIG domain occupies 262–344 (PCIKAISPSE…CKGTPGRFIY (83 aa)). Positions 454–466 (ANQGFSRNTSSVS) are enriched in polar residues. A disordered region spans residues 454 to 484 (ANQGFSRNTSSVSPHGYVPSTTPQQSSYSTV). The segment covering 471–484 (VPSTTPQQSSYSTV) has biased composition (low complexity).

The protein belongs to the COE family. As to quaternary structure, forms either a homodimer or a heterodimer with a related family member. As to expression, detected in B cells.

It is found in the nucleus. Its function is as follows. Transcriptional activator. This Danio rerio (Zebrafish) protein is Transcription factor COE1-A.